Here is a 151-residue protein sequence, read N- to C-terminus: Large ribosomal subunit protein bL9 (151 aa).

Belongs to the bacterial ribosomal protein bL9 family.

Functionally, binds to the 23S rRNA. This is Large ribosomal subunit protein bL9 from Desulfotalea psychrophila (strain LSv54 / DSM 12343).